A 184-amino-acid chain; its full sequence is GMP synthase [glutamine-hydrolyzing] subunit A (184 aa).

Residues 3 to 184 enclose the Glutamine amidotransferase type-1 domain; that stretch reads PLYVVNNHGQ…FENFDGICSE (182 aa). Cysteine 75 serves as the catalytic Nucleophile. Catalysis depends on residues histidine 162 and glutamate 164.

Heterodimer composed of a glutamine amidotransferase subunit (A) and a GMP-binding subunit (B).

The catalysed reaction is XMP + L-glutamine + ATP + H2O = GMP + L-glutamate + AMP + diphosphate + 2 H(+). It participates in purine metabolism; GMP biosynthesis; GMP from XMP (L-Gln route): step 1/1. In terms of biological role, catalyzes the synthesis of GMP from XMP. The polypeptide is GMP synthase [glutamine-hydrolyzing] subunit A (Methanoculleus marisnigri (strain ATCC 35101 / DSM 1498 / JR1)).